The primary structure comprises 185 residues: Peptidyl-tRNA hydrolase (185 aa).

Tyrosine 14 is a tRNA binding site. The Proton acceptor role is filled by histidine 19. Residues phenylalanine 64, asparagine 66, and asparagine 112 each coordinate tRNA.

It belongs to the PTH family. In terms of assembly, monomer.

The protein resides in the cytoplasm. The catalysed reaction is an N-acyl-L-alpha-aminoacyl-tRNA + H2O = an N-acyl-L-amino acid + a tRNA + H(+). Functionally, hydrolyzes ribosome-free peptidyl-tRNAs (with 1 or more amino acids incorporated), which drop off the ribosome during protein synthesis, or as a result of ribosome stalling. In terms of biological role, catalyzes the release of premature peptidyl moieties from peptidyl-tRNA molecules trapped in stalled 50S ribosomal subunits, and thus maintains levels of free tRNAs and 50S ribosomes. This chain is Peptidyl-tRNA hydrolase, found in Caldanaerobacter subterraneus subsp. tengcongensis (strain DSM 15242 / JCM 11007 / NBRC 100824 / MB4) (Thermoanaerobacter tengcongensis).